Reading from the N-terminus, the 236-residue chain is Urease accessory protein UreF (236 aa).

It belongs to the UreF family. In terms of assembly, ureD, UreF and UreG form a complex that acts as a GTP-hydrolysis-dependent molecular chaperone, activating the urease apoprotein by helping to assemble the nickel containing metallocenter of UreC. The UreE protein probably delivers the nickel.

Its subcellular location is the cytoplasm. In terms of biological role, required for maturation of urease via the functional incorporation of the urease nickel metallocenter. This Granulibacter bethesdensis (strain ATCC BAA-1260 / CGDNIH1) protein is Urease accessory protein UreF.